A 153-amino-acid chain; its full sequence is Endoribonuclease YbeY (153 aa).

Zn(2+) is bound by residues His114, His118, and His124.

It belongs to the endoribonuclease YbeY family. It depends on Zn(2+) as a cofactor.

It is found in the cytoplasm. In terms of biological role, single strand-specific metallo-endoribonuclease involved in late-stage 70S ribosome quality control and in maturation of the 3' terminus of the 16S rRNA. The protein is Endoribonuclease YbeY of Shewanella oneidensis (strain ATCC 700550 / JCM 31522 / CIP 106686 / LMG 19005 / NCIMB 14063 / MR-1).